The chain runs to 345 residues: Ferritin-like-encapsulin shell fusion protein (345 aa).

Residues 1 to 109 (MLSINPTLIN…INDNKKEESN (109 aa)) are ferritin-like domain. Fe cation contacts are provided by Glu-31, Glu-61, and His-64. An encapsulin domain region spans residues 110–345 (VEYFEKLRSA…KNPEAIVVLE (236 aa)).

In the N-terminal section; belongs to the ferritin-like superfamily. This sequence in the C-terminal section; belongs to the encapsulin family. Family 1 subfamily. 180 monomers assemble into 12 pentamers and 20 hexamers which further assemble into an icosahedral particle about 36.6 nm in diameter. The N-terminal domain (residues 1-99) crystallizes as 3 decamers.

It localises to the encapsulin nanocompartment. The enzyme catalyses 4 Fe(2+) + O2 + 4 H(+) = 4 Fe(3+) + 2 H2O. Its activity is regulated as follows. The ferroxidase activity is inhibited by zinc. Functionally, fusion of the shell and cargo protein of a type 1 encapsulin nanocompartment. The nanocompartment is probably involved in iron storage. Expression in E.coli generates spherical particles (PfSPs) about 30 nm in diameter. The purified N-terminus has ferroxidase activity. The protein is Ferritin-like-encapsulin shell fusion protein of Pyrococcus furiosus (strain ATCC 43587 / DSM 3638 / JCM 8422 / Vc1).